The following is a 1097-amino-acid chain: Mitochondrial distribution and morphology protein 34 (1097 aa).

The SMP-LTD domain maps to 1–198 (MSFNFKWPTF…LPGIIHRLSQ (198 aa)). Disordered regions lie at residues 204 to 305 (EAKS…PLHS), 317 to 343 (AAFP…SGFS), 390 to 427 (QSDD…LDAV), 480 to 520 (DDQP…TSSL), 556 to 600 (PEVD…SSRT), 645 to 675 (LDAE…RDLS), 716 to 817 (GQNA…SPGV), and 923 to 1097 (GSSA…AIRE). Residues 205 to 229 (AKSEKDKVKQKAEAEEPPARSREPT) show a composition bias toward basic and acidic residues. Positions 252-263 (RKSHSKAKKHSR) are enriched in basic residues. Low complexity predominate over residues 274 to 283 (SPCQSPQRPR). A compositionally biased stretch (basic residues) spans 284-293 (QSPRRPRHVA). A compositionally biased stretch (basic and acidic residues) spans 406–416 (SSSHDGKHDEG). 2 stretches are compositionally biased toward low complexity: residues 508 to 519 (SSRSDRSACTSS) and 572 to 586 (GGTP…RFGS). Positions 662–675 (TNPTSRESSYRDLS) are enriched in polar residues. A compositionally biased stretch (low complexity) spans 759–779 (GMSATPARTRASAAASARSRP). The span at 784 to 796 (YATSPPGDSSGWQ) shows a compositional bias: polar residues. Positions 923-943 (GSSAASGTGTTSGSSQTGANA) are enriched in low complexity. Positions 1004 to 1024 (SNKPNNTSTGQGEDSQDNSAA) are enriched in polar residues. A compositionally biased stretch (low complexity) spans 1045-1059 (ASGSSASSAITDSSS).

The protein belongs to the MDM34 family. In terms of assembly, component of the ER-mitochondria encounter structure (ERMES) or MDM complex, composed of MMM1, MDM10, MDM12 and MDM34.

It is found in the mitochondrion outer membrane. Component of the ERMES/MDM complex, which serves as a molecular tether to connect the endoplasmic reticulum (ER) and mitochondria. Components of this complex are involved in the control of mitochondrial shape and protein biogenesis, and function in nonvesicular lipid trafficking between the ER and mitochondria. MDM34 is required for the interaction of the ER-resident membrane protein MMM1 and the outer mitochondrial membrane-resident beta-barrel protein MDM10. This is Mitochondrial distribution and morphology protein 34 from Mycosarcoma maydis (Corn smut fungus).